Consider the following 347-residue polypeptide: Quinolinate synthase (347 aa).

Residues His47 and Ser68 each coordinate iminosuccinate. Residue Cys113 participates in [4Fe-4S] cluster binding. Residues 139 to 141 and Ser156 each bind iminosuccinate; that span reads YAN. [4Fe-4S] cluster is bound at residue Cys200. Iminosuccinate-binding positions include 226 to 228 and Thr243; that span reads HPE. Cys297 is a [4Fe-4S] cluster binding site.

The protein belongs to the quinolinate synthase family. Type 1 subfamily. It depends on [4Fe-4S] cluster as a cofactor.

It is found in the cytoplasm. The enzyme catalyses iminosuccinate + dihydroxyacetone phosphate = quinolinate + phosphate + 2 H2O + H(+). Its pathway is cofactor biosynthesis; NAD(+) biosynthesis; quinolinate from iminoaspartate: step 1/1. Functionally, catalyzes the condensation of iminoaspartate with dihydroxyacetone phosphate to form quinolinate. The chain is Quinolinate synthase from Shigella boydii serotype 4 (strain Sb227).